Here is a 642-residue protein sequence, read N- to C-terminus: Kinesin-like protein KIN-7L (642 aa).

The 335-residue stretch at 3–337 (KISVAVRFRP…LQFASRAKCV (335 aa)) folds into the Kinesin motor domain. Positions 12 to 27 (PPTTAAPAADQSPSST) are enriched in low complexity. The segment at 12 to 33 (PPTTAAPAADQSPSSTGGDREW) is disordered. Residue 94–101 (GQTSSGKT) participates in ATP binding. Coiled coils occupy residues 343-428 (VNEI…SNTS) and 540-612 (RQQL…FSQA).

The protein belongs to the TRAFAC class myosin-kinesin ATPase superfamily. Kinesin family. KIN-7 subfamily.

This Oryza sativa subsp. japonica (Rice) protein is Kinesin-like protein KIN-7L.